A 158-amino-acid polypeptide reads, in one-letter code: uncharacterized protein (158 aa).

The span at 1-18 (MDLASEITSATQTSSLCS) shows a compositional bias: polar residues. 3 disordered regions span residues 1-20 (MDLA…CSSG), 66-94 (LRDL…KPCL), and 111-158 (GSSG…GEEF). The span at 72–90 (RGSTSSSRSPSRPVSTSAS) shows a compositional bias: low complexity. 2 stretches are compositionally biased toward polar residues: residues 111–120 (GSSGHLQSPG) and 149–158 (LSHSAQGEEF).

This is an uncharacterized protein from Homo sapiens (Human).